Consider the following 515-residue polypeptide: Maturase K (515 aa).

Belongs to the intron maturase 2 family. MatK subfamily.

It localises to the plastid. The protein resides in the chloroplast. Usually encoded in the trnK tRNA gene intron. Probably assists in splicing its own and other chloroplast group II introns. This Pseudotsuga menziesii (Douglas-fir) protein is Maturase K.